The following is a 155-amino-acid chain: MTEAAEATFSADIQLIQRIIPHRYPFLLVDRVRDIVPNKSAVGIKCVTMNEPQFTGHFPGLPIFPGVQIIEAMAQTSAVLVGVSMDLADKGAKVYFMGIDGAKFRRKVVPGDVLEMTVTVKRGGGKVWKFEGRASVDGELAAEAEFSAMLDLPKG.

Residue H57 is part of the active site.

It belongs to the thioester dehydratase family. FabZ subfamily.

The protein localises to the cytoplasm. It carries out the reaction a (3R)-hydroxyacyl-[ACP] = a (2E)-enoyl-[ACP] + H2O. In terms of biological role, involved in unsaturated fatty acids biosynthesis. Catalyzes the dehydration of short chain beta-hydroxyacyl-ACPs and long chain saturated and unsaturated beta-hydroxyacyl-ACPs. The protein is 3-hydroxyacyl-[acyl-carrier-protein] dehydratase FabZ of Cereibacter sphaeroides (strain KD131 / KCTC 12085) (Rhodobacter sphaeroides).